The primary structure comprises 5875 residues: Probable E3 ubiquitin-protein ligase DDB_G0283893 (5875 aa).

Disordered stretches follow at residues 17 to 64 (DNNN…QPPE), 164 to 185 (NNNN…QSNN), 232 to 276 (DSNN…TTTS), 302 to 342 (PSFK…CGNG), 642 to 693 (TTTT…SPPI), 716 to 740 (SIRS…TTNA), 1081 to 1101 (ITPT…TSIP), 1291 to 1367 (DGWE…KEST), 1806 to 1851 (QESE…SSPP), 1952 to 1982 (KKPS…KDEV), 2008 to 2036 (EDED…DDEE), 2109 to 2203 (KALK…TGSG), 2893 to 2930 (DSDD…TNDS), 3083 to 3119 (TSPS…SGSN), and 3195 to 3214 (LLPP…DNTN). Residues 18-52 (NNNNNNNNNNNNNNNNNNNNNNNNNNNSNNNNNKN) are compositionally biased toward low complexity. The span at 237-249 (DNKENKKEDKESS) shows a compositional bias: basic and acidic residues. 3 stretches are compositionally biased toward low complexity: residues 250 to 276 (KPIA…TTTS), 317 to 333 (TSTI…ITQP), and 642 to 656 (TTTT…TTTT). A compositionally biased stretch (polar residues) spans 657–669 (NESIPMETTRSST). The span at 670–693 (PIPIVNNNNNNNDSKSNSKKSPPI) shows a compositional bias: low complexity. Residues 716–725 (SIRSSSNKVN) are compositionally biased toward polar residues. Residues 728–740 (TPKSSTTTTTTNA) show a composition bias toward low complexity. The segment covering 1297-1330 (FNDDDDEEEDEEEEEEMDEDDSENDEDEDSEESE) has biased composition (acidic residues). The stretch at 1300-1328 (DDDEEEDEEEEEEMDEDDSENDEDEDSEE) forms a coiled coil. Composition is skewed to low complexity over residues 1347-1363 (TTTT…TATT) and 1838-1851 (SNSS…SSPP). Over residues 1963-1977 (GGCHHSNHHHHHHHS) the composition is skewed to basic residues. The UBR-type zinc finger occupies 2042-2113 (KVCTYTFTKN…KGNPCKALKP (72 aa)). Composition is skewed to low complexity over residues 2118–2168 (PPKQ…TNTN) and 2178–2203 (SSSS…TGSG). The span at 2893–2903 (DSDDSDDEFPT) shows a compositional bias: acidic residues. Residues 2908–2917 (VTSSGLSTSA) show a composition bias toward low complexity. Residues 3201-3211 (SSSNENVVDND) show a composition bias toward low complexity. The ZZ-type zinc-finger motif lies at 3226-3280 (EVLFSCDLCNINPITGKRWNCSNCGDFDLCNQCYQNPEKDHPKDHIFKEFIIDEP). Residues C3231, C3234, C3246, C3249, C3255, C3258, H3266, and H3270 each contribute to the Zn(2+) site. Disordered regions lie at residues 3282-3312 (KDGD…QDDS), 3326-3359 (LNNN…PTTN), and 3754-3776 (SSTS…SNDI). Composition is skewed to low complexity over residues 3295-3307 (QQQK…LQQD) and 3327-3358 (NNNN…TPTT). The UIM domain occupies 3313-3332 (EYDEELKIAISMSLNNNNNN). Polar residues predominate over residues 3754–3763 (SSTSQDTQQE). Residues 3764 to 3774 (SSNNNNNNNSN) show a composition bias toward low complexity. The stretch at 4118 to 4146 (IENQEDHKRAIQTIEKESENAHKKYQRLI) forms a coiled coil. Residues 4182–4222 (NTSTNSTGSNNQSINSSSGNISTNSSSSSSSSFGISNQSSS) show a composition bias toward low complexity. 3 disordered regions span residues 4182–4237 (NTST…GGVI), 4295–4323 (FISG…RQCP), and 4616–4671 (KILS…FDND). Positions 4223–4236 (GNGGGGVGSGGGGV) are enriched in gly residues. A compositionally biased stretch (low complexity) spans 4308-4317 (QQQQQQQQQQ). Positions 4585–4618 (QIQQQIALQQQQIQQQIQQQQQQLNESVSGLKIL) form a coiled coil. Low complexity-rich tracts occupy residues 4619 to 4635 (SPSS…ATGS) and 4645 to 4659 (SSGS…ISSS). The segment at 5357–5870 (PALPFVLVLL…EYLLKLYKSV (514 aa)) is UBR4 E3 catalytic module. The HemiRING-type zinc-finger motif lies at 5476–5620 (GFTCMVCREG…WVNLNNISRV (145 aa)). Zn(2+) is bound by residues C5479, C5482, H5554, and C5557. Positions 5623–5870 (PKFRILSHDL…EYLLKLYKSV (248 aa)) constitute a UZI domain. The stretch at 5819–5846 (QVDVKELLNCFENELKEFQDEMEFFDDE) forms a coiled coil.

This sequence belongs to the UBR4 family.

The protein operates within protein modification; protein ubiquitination. Functionally, probable E3 ubiquitin-protein ligase. The polypeptide is Probable E3 ubiquitin-protein ligase DDB_G0283893 (Dictyostelium discoideum (Social amoeba)).